A 179-amino-acid chain; its full sequence is Large ribosomal subunit protein uL6 (179 aa).

Belongs to the universal ribosomal protein uL6 family. In terms of assembly, part of the 50S ribosomal subunit.

This protein binds to the 23S rRNA, and is important in its secondary structure. It is located near the subunit interface in the base of the L7/L12 stalk, and near the tRNA binding site of the peptidyltransferase center. The sequence is that of Large ribosomal subunit protein uL6 from Leptospira biflexa serovar Patoc (strain Patoc 1 / ATCC 23582 / Paris).